A 287-amino-acid polypeptide reads, in one-letter code: Nucleotide-binding protein HEAR2885 (287 aa).

8-15 is an ATP binding site; it reads GISGSGKS. A GTP-binding site is contributed by 57–60; sequence DVRS.

It belongs to the RapZ-like family.

Displays ATPase and GTPase activities. This chain is Nucleotide-binding protein HEAR2885, found in Herminiimonas arsenicoxydans.